Here is a 189-residue protein sequence, read N- to C-terminus: GTP cyclohydrolase 1 (189 aa).

Zn(2+)-binding residues include C78, H81, and C150.

This sequence belongs to the GTP cyclohydrolase I family. As to quaternary structure, homomer.

The catalysed reaction is GTP + H2O = 7,8-dihydroneopterin 3'-triphosphate + formate + H(+). It functions in the pathway cofactor biosynthesis; 7,8-dihydroneopterin triphosphate biosynthesis; 7,8-dihydroneopterin triphosphate from GTP: step 1/1. The polypeptide is GTP cyclohydrolase 1 (Listeria monocytogenes serotype 4b (strain CLIP80459)).